A 383-amino-acid polypeptide reads, in one-letter code: S-adenosylmethionine synthase (383 aa).

ATP is bound at residue His-22. Asp-24 is a Mg(2+) binding site. Glu-50 is a K(+) binding site. Glu-63 and Gln-99 together coordinate L-methionine. A flexible loop region spans residues 99-109 (QSLEINQAVLK). ATP contacts are provided by residues 160-162 (DMK), Asp-235, 241-242 (RK), Ser-258, and Lys-262. Asp-235 serves as a coordination point for L-methionine. Position 266 (Lys-266) interacts with L-methionine.

It belongs to the AdoMet synthase family. As to quaternary structure, homotetramer; dimer of dimers. Mg(2+) is required as a cofactor. It depends on K(+) as a cofactor.

It is found in the cytoplasm. It carries out the reaction L-methionine + ATP + H2O = S-adenosyl-L-methionine + phosphate + diphosphate. It functions in the pathway amino-acid biosynthesis; S-adenosyl-L-methionine biosynthesis; S-adenosyl-L-methionine from L-methionine: step 1/1. Functionally, catalyzes the formation of S-adenosylmethionine (AdoMet) from methionine and ATP. The overall synthetic reaction is composed of two sequential steps, AdoMet formation and the subsequent tripolyphosphate hydrolysis which occurs prior to release of AdoMet from the enzyme. The chain is S-adenosylmethionine synthase from Mycoplasma genitalium (strain ATCC 33530 / DSM 19775 / NCTC 10195 / G37) (Mycoplasmoides genitalium).